Consider the following 156-residue polypeptide: Small ribosomal subunit protein uS7 (156 aa).

This sequence belongs to the universal ribosomal protein uS7 family. In terms of assembly, part of the 30S ribosomal subunit. Contacts proteins S9 and S11.

Functionally, one of the primary rRNA binding proteins, it binds directly to 16S rRNA where it nucleates assembly of the head domain of the 30S subunit. Is located at the subunit interface close to the decoding center, probably blocks exit of the E-site tRNA. This Buchnera aphidicola subsp. Baizongia pistaciae (strain Bp) protein is Small ribosomal subunit protein uS7.